The following is a 30-amino-acid chain: Cycloviolin-C (30 aa).

A cross-link (cyclopeptide (Gly-Asn)) is located at residues 1-30; sequence GIPCGESCVFIPCLTTVAGCSCKNKVCYRN. Cystine bridges form between C4–C20, C8–C22, and C13–C27.

In terms of processing, this is a cyclic peptide.

Its function is as follows. Probably participates in a plant defense mechanism. Has anti-HIV activity. This Leonia cymosa (Sacha uba) protein is Cycloviolin-C.